A 385-amino-acid chain; its full sequence is Glutamate 5-kinase (385 aa).

K17 contacts ATP. Positions 64, 151, and 165 each coordinate substrate. Residue 185–186 (SD) coordinates ATP. One can recognise a PUA domain in the interval 291 to 367 (SGTVRVDAGA…NQIDNILGYN (77 aa)).

This sequence belongs to the glutamate 5-kinase family.

It is found in the cytoplasm. The catalysed reaction is L-glutamate + ATP = L-glutamyl 5-phosphate + ADP. It participates in amino-acid biosynthesis; L-proline biosynthesis; L-glutamate 5-semialdehyde from L-glutamate: step 1/2. Its function is as follows. Catalyzes the transfer of a phosphate group to glutamate to form L-glutamate 5-phosphate. The protein is Glutamate 5-kinase of Methanosarcina acetivorans (strain ATCC 35395 / DSM 2834 / JCM 12185 / C2A).